The primary structure comprises 862 residues: Probable inorganic carbon transporter subunit DabA (862 aa).

Positions 365, 367, 540, and 555 each coordinate Zn(2+).

The protein belongs to the inorganic carbon transporter (TC 9.A.2) DabA family. In terms of assembly, forms a complex with DabB. Zn(2+) is required as a cofactor.

The protein localises to the cell inner membrane. Its function is as follows. Part of an energy-coupled inorganic carbon pump. In Vibrio cholerae serotype O1 (strain ATCC 39315 / El Tor Inaba N16961), this protein is Probable inorganic carbon transporter subunit DabA.